The chain runs to 305 residues: MTRHPEYQYLDLMSELLETGDRRMDRTGEGTLSLFGKQMRFKLSDGTIPIFTTKKVYWKTSVKEMLWFLTGQTNISSLLRENVRIWTDWPLAKYRKATGETISQEQFEDRIVASDEFASEWGDLGPVYGKQWRRWVDNDGQEHDQIATVISTLKTNPTSRRILFHAWNVGELDRMALHPCHMTYQFHVSWPNGQDGRPQLSMMVHQRSCDIFLGAPFNICQQAVLLAMIAQQVDMDRGELVWLGGDTHLYLNHLDQARLQLSRKPKPFPKLEIKRRPASIDGYTIDDFEVSEYQSHERIEAPVAV.

Residues Arg26 and 160–161 each bind dUMP; that span reads RR. Cys180 functions as the Nucleophile in the catalytic mechanism. DUMP contacts are provided by residues 207 to 210, Asn218, and 248 to 250; these read RSCD and HLY. (6R)-5,10-methylene-5,6,7,8-tetrahydrofolate is bound at residue Asp210. Residue Ala304 coordinates (6R)-5,10-methylene-5,6,7,8-tetrahydrofolate.

Belongs to the thymidylate synthase family. Bacterial-type ThyA subfamily. Homodimer.

It is found in the cytoplasm. It catalyses the reaction dUMP + (6R)-5,10-methylene-5,6,7,8-tetrahydrofolate = 7,8-dihydrofolate + dTMP. It functions in the pathway pyrimidine metabolism; dTTP biosynthesis. In terms of biological role, catalyzes the reductive methylation of 2'-deoxyuridine-5'-monophosphate (dUMP) to 2'-deoxythymidine-5'-monophosphate (dTMP) while utilizing 5,10-methylenetetrahydrofolate (mTHF) as the methyl donor and reductant in the reaction, yielding dihydrofolate (DHF) as a by-product. This enzymatic reaction provides an intracellular de novo source of dTMP, an essential precursor for DNA biosynthesis. This chain is Thymidylate synthase, found in Sinorhizobium fredii (strain NBRC 101917 / NGR234).